Here is a 363-residue protein sequence, read N- to C-terminus: NAD(P)H-quinone oxidoreductase subunit 1, chloroplastic (363 aa).

8 helical membrane-spanning segments follow: residues 30–50, 98–118, 127–147, 165–185, 203–223, 248–268, 300–320, and 336–356; these read LVPI…IVWL, FSIG…VIPF, LSIG…GLLM, AAQS…ISLL, FWGW…ISSL, YSGI…LVSS, VFGT…FLFI, and LLNL…LLTT.

The protein belongs to the complex I subunit 1 family. In terms of assembly, NDH is composed of at least 16 different subunits, 5 of which are encoded in the nucleus.

The protein resides in the plastid. The protein localises to the chloroplast thylakoid membrane. The enzyme catalyses a plastoquinone + NADH + (n+1) H(+)(in) = a plastoquinol + NAD(+) + n H(+)(out). The catalysed reaction is a plastoquinone + NADPH + (n+1) H(+)(in) = a plastoquinol + NADP(+) + n H(+)(out). NDH shuttles electrons from NAD(P)H:plastoquinone, via FMN and iron-sulfur (Fe-S) centers, to quinones in the photosynthetic chain and possibly in a chloroplast respiratory chain. The immediate electron acceptor for the enzyme in this species is believed to be plastoquinone. Couples the redox reaction to proton translocation, and thus conserves the redox energy in a proton gradient. The chain is NAD(P)H-quinone oxidoreductase subunit 1, chloroplastic from Solanum lycopersicum (Tomato).